Here is a 311-residue protein sequence, read N- to C-terminus: Malate dehydrogenase (311 aa).

NAD(+) contacts are provided by residues 7–13 and aspartate 34; that span reads GAAGGIG. Positions 81 and 87 each coordinate substrate. Residues asparagine 94 and 117-119 each bind NAD(+); that span reads ITN. Asparagine 119 and arginine 153 together coordinate substrate. The active-site Proton acceptor is histidine 177. NAD(+) is bound at residue methionine 227.

Belongs to the LDH/MDH superfamily. MDH type 1 family. Homodimer.

It catalyses the reaction (S)-malate + NAD(+) = oxaloacetate + NADH + H(+). Catalyzes the reversible oxidation of malate to oxaloacetate. This Shewanella sediminis (strain HAW-EB3) protein is Malate dehydrogenase.